The chain runs to 145 residues: Large ribosomal subunit protein uL15 (145 aa).

Basic residues-rich tracts occupy residues 1-13 (MIRK…KQRG) and 22-33 (TKKRRGAGHRGG). The interval 1-41 (MIRKTKKIRKQRGSRSVGGGCTKKRRGAGHRGGRGQAGGNK) is disordered.

The protein belongs to the universal ribosomal protein uL15 family. In terms of assembly, part of the 50S ribosomal subunit.

In terms of biological role, binds to the 23S rRNA. The sequence is that of Large ribosomal subunit protein uL15 from Methanosphaera stadtmanae (strain ATCC 43021 / DSM 3091 / JCM 11832 / MCB-3).